The following is a 207-amino-acid chain: ATP-dependent Clp protease proteolytic subunit 1 (207 aa).

Residue S103 is the Nucleophile of the active site. H128 is a catalytic residue.

This sequence belongs to the peptidase S14 family. Fourteen ClpP subunits assemble into 2 heptameric rings which stack back to back to give a disk-like structure with a central cavity, resembling the structure of eukaryotic proteasomes.

The protein resides in the cytoplasm. It catalyses the reaction Hydrolysis of proteins to small peptides in the presence of ATP and magnesium. alpha-casein is the usual test substrate. In the absence of ATP, only oligopeptides shorter than five residues are hydrolyzed (such as succinyl-Leu-Tyr-|-NHMec, and Leu-Tyr-Leu-|-Tyr-Trp, in which cleavage of the -Tyr-|-Leu- and -Tyr-|-Trp bonds also occurs).. Cleaves peptides in various proteins in a process that requires ATP hydrolysis. Has a chymotrypsin-like activity. Plays a major role in the degradation of misfolded proteins. This chain is ATP-dependent Clp protease proteolytic subunit 1, found in Tropheryma whipplei (strain Twist) (Whipple's bacillus).